The following is a 688-amino-acid chain: Probable glucan endo-1,3-beta-glucosidase btgC (688 aa).

Disordered stretches follow at residues 1-91 (MSGP…NLGP), 126-148 (ANIP…PEPP), and 168-195 (GQLT…IPYQ). Topologically, residues 1–307 (MSGPNRTYSF…PKPGGGNKKR (307 aa)) are cytoplasmic. Over residues 175 to 188 (SVSHLSSTNPSQRN) the composition is skewed to polar residues. Residues 308–328 (GWIVGAILAFIIIGAIVGGAV) form a helical; Signal-anchor for type II membrane protein membrane-spanning segment. The Extracellular portion of the chain corresponds to 329–688 (GGTIGHRGNE…IPDCGGKTAT (360 aa)). The segment at 334–363 (HRGNEEPSSASSASSSSTQTATEDTSVNGD) is disordered. Residues 341-355 (SSASSASSSSTQTAT) show a composition bias toward low complexity. N-linked (GlcNAc...) asparagine glycosylation is found at asparagine 408, asparagine 431, and asparagine 459. Glutamate 491 functions as the Proton donor in the catalytic mechanism. Glutamate 590 functions as the Nucleophile in the catalytic mechanism. 2 N-linked (GlcNAc...) asparagine glycosylation sites follow: asparagine 609 and asparagine 635.

It belongs to the glycosyl hydrolase 17 family.

It localises to the cell membrane. The catalysed reaction is Hydrolysis of (1-&gt;3)-beta-D-glucosidic linkages in (1-&gt;3)-beta-D-glucans.. Its function is as follows. Glucanases play a role in cell expansion during growth, in cell-cell fusion during mating, and in spore release during sporulation. This enzyme may be involved in beta-glucan degradation. Active on laminarin and lichenan. This Aspergillus fumigatus (strain ATCC MYA-4609 / CBS 101355 / FGSC A1100 / Af293) (Neosartorya fumigata) protein is Probable glucan endo-1,3-beta-glucosidase btgC (btgC).